We begin with the raw amino-acid sequence, 147 residues long: NADH-quinone oxidoreductase subunit A (147 aa).

A run of 3 helical transmembrane segments spans residues 16-36 (FAIF…GGWF), 68-88 (FYLV…LFAW), and 97-117 (WVGF…LVYL).

This sequence belongs to the complex I subunit 3 family. In terms of assembly, NDH-1 is composed of 13 different subunits. Subunits NuoA, H, J, K, L, M, N constitute the membrane sector of the complex.

Its subcellular location is the cell inner membrane. The catalysed reaction is a quinone + NADH + 5 H(+)(in) = a quinol + NAD(+) + 4 H(+)(out). NDH-1 shuttles electrons from NADH, via FMN and iron-sulfur (Fe-S) centers, to quinones in the respiratory chain. The immediate electron acceptor for the enzyme in this species is believed to be ubiquinone. Couples the redox reaction to proton translocation (for every two electrons transferred, four hydrogen ions are translocated across the cytoplasmic membrane), and thus conserves the redox energy in a proton gradient. The protein is NADH-quinone oxidoreductase subunit A of Salmonella paratyphi A (strain ATCC 9150 / SARB42).